The chain runs to 2271 residues: Serine-rich adhesin for platelets (2271 aa).

A signal peptide spans 1–89 (MSKRQKAFHD…VNMLHDQQAF (89 aa)). Positions 90–230 (AASDAPLTSE…KTSTTSTSTA (141 aa)) are serine-rich repeat region 1, SRR1. Polar residues predominate over residues 100-111 (LNTQSETVGNQN). Residues 100–229 (LNTQSETVGN…NKTSTTSTST (130 aa)) form a disordered region. The span at 112–128 (STTIEASTSTADSTSVT) shows a compositional bias: low complexity. A compositionally biased stretch (polar residues) spans 129 to 140 (KNSSSVQTSNSD). The span at 150 to 229 (VTSTTNSTSN…NKTSTTSTST (80 aa)) shows a compositional bias: low complexity. The interval 231–751 (PVKLRTFSRL…TTFKYEVTRN (521 aa)) is non-repeat region (NRR). An L-lectin module region spans residues 245-491 (FASAATTTAV…QQVQFGTFEY (247 aa)). Ca(2+)-binding residues include aspartate 365, tyrosine 367, asparagine 369, and aspartate 382. Positions 492–571 (TESAVTQVRY…NAGQSVTYYF (80 aa)) are beta-grasp module. The segment at 572-659 (TDVKAPTVTV…KSTTTFTINV (88 aa)) is cadherin-like module-1. Residues aspartate 573, lysine 575, aspartate 601, asparagine 602, aspartate 645, aspartate 661, threonine 663, aspartate 690, asparagine 691, and aspartate 734 each contribute to the Ca(2+) site. Residues 660-751 (VDTTAPTVTP…TTFKYEVTRN (92 aa)) are cadherin-like module-2. Disordered regions lie at residues 751-791 (NSMS…VVST) and 806-2242 (SVSA…NGLL). Low complexity-rich tracts occupy residues 752–791 (SMSD…VVST), 806–1392 (SVSA…LSLS), and 1402–2214 (SNSA…ATSE). Residues 752 to 2232 (SMSDSVSTSG…AQSEKRLPDT (1481 aa)) are serine-rich repeat region 2, SRR2. Residues 2229–2233 (LPDTG) carry the LPXTG sorting signal motif. A Pentaglycyl murein peptidoglycan amidated threonine modification is found at threonine 2232. Positions 2233 to 2271 (GDSIKQNGLLGGVMTLLVGLGLMKRKKKKDENDQDDSQA) are cleaved as a propeptide — removed by sortase.

It belongs to the serine-rich repeat protein (SRRP) family. In terms of processing, proteolytically cleaved by a metalloprotease. Post-translationally, glycosylated. It is probable that most of the Ser residues in SSR1 and SSR2 are O-GlcNAcylated. Sequential glycosylation by sugar transferases are able to generate complex sugar polymorphisms.

It localises to the secreted. Its subcellular location is the cell wall. Mediates binding to human platelets, possibly through a receptor-ligand interaction. Probably associated with virulence in endovascular infection. Plays a positive role in biofilm formation, possibly by self-association via the non-repeat region (NRR or binding region, BR). Binds to and plays a role in human lung epithelial cell invasion via the L-lectin module of its NRR domain; N-acetylneuraminic acid (Neu5Ac) inhibits binding. Treatment of host cells with neuraminidase decreases adherence of S.aureus cells, suggesting SraP recognizes a host terminal Neu5Ac moiety as a receptor. This is Serine-rich adhesin for platelets from Staphylococcus aureus (strain NCTC 8325 / PS 47).